Here is a 127-residue protein sequence, read N- to C-terminus: Glycine cleavage system H protein (127 aa).

Positions 24–105 (TLTIGITDLA…AYDAWLFKIK (82 aa)) constitute a Lipoyl-binding domain. Lys-65 bears the N6-lipoyllysine mark.

This sequence belongs to the GcvH family. The glycine cleavage system is composed of four proteins: P, T, L and H. The cofactor is (R)-lipoate.

In terms of biological role, the glycine cleavage system catalyzes the degradation of glycine. The H protein shuttles the methylamine group of glycine from the P protein to the T protein. This chain is Glycine cleavage system H protein, found in Ralstonia nicotianae (strain ATCC BAA-1114 / GMI1000) (Ralstonia solanacearum).